Here is a 119-residue protein sequence, read N- to C-terminus: NADH-quinone oxidoreductase subunit A (119 aa).

A run of 3 helical transmembrane segments spans residues 7-27 (FPVL…MFLG), 63-83 (LIAI…PWGV), and 88-108 (IGWF…VGFV).

It belongs to the complex I subunit 3 family. In terms of assembly, NDH-1 is composed of 14 different subunits. Subunits NuoA, H, J, K, L, M, N constitute the membrane sector of the complex.

It is found in the cell membrane. It carries out the reaction a quinone + NADH + 5 H(+)(in) = a quinol + NAD(+) + 4 H(+)(out). Its function is as follows. NDH-1 shuttles electrons from NADH, via FMN and iron-sulfur (Fe-S) centers, to quinones in the respiratory chain. The immediate electron acceptor for the enzyme in this species is believed to be ubiquinone. Couples the redox reaction to proton translocation (for every two electrons transferred, four hydrogen ions are translocated across the cytoplasmic membrane), and thus conserves the redox energy in a proton gradient. The protein is NADH-quinone oxidoreductase subunit A of Polynucleobacter asymbioticus (strain DSM 18221 / CIP 109841 / QLW-P1DMWA-1) (Polynucleobacter necessarius subsp. asymbioticus).